We begin with the raw amino-acid sequence, 206 residues long: Flavin reductase (NADPH) (206 aa).

NADP(+) is bound by residues glycine 10, threonine 12, glycine 13, asparagine 14, threonine 15, arginine 35, serine 38, and arginine 39. Serine 42 carries the post-translational modification Phosphoserine. NADP(+) is bound by residues aspartate 54, valine 55, leucine 75, glycine 76, and arginine 78. Serine 82 carries the post-translational modification Phosphoserine. 5 residues coordinate NADP(+): methionine 87, cysteine 109, histidine 132, histidine 153, and isoleucine 154. Cysteine 109 acts as the S-nitroso-cysteine intermediate; for S-nitroso-CoA-dependent nitrosyltransferase activity in catalysis. Cysteine 188 functions as the S-nitroso-cysteine intermediate; for S-nitroso-CoA-dependent nitrosyltransferase activity in the catalytic mechanism.

In terms of assembly, monomer. As to expression, at least expressed in the liver and erythrocyte.

Its subcellular location is the cytoplasm. It carries out the reaction reduced riboflavin + NADP(+) = riboflavin + NADPH + 2 H(+). The enzyme catalyses bilirubin IXbeta + NADP(+) = biliverdin IXbeta + NADPH + H(+). It catalyses the reaction FMNH2 + NAD(+) = FMN + NADH + 2 H(+). The catalysed reaction is FMNH2 + NADP(+) = FMN + NADPH + 2 H(+). It carries out the reaction S-nitroso-CoA + L-cysteinyl-[protein] = S-nitroso-L-cysteinyl-[protein] + CoA. The enzyme catalyses L-cysteinyl-[SCAN] + S-nitroso-CoA = S-nitroso-L-cysteinyl-[SCAN] + CoA. It catalyses the reaction S-nitroso-L-cysteinyl-[SCAN] + L-cysteinyl-[protein] = L-cysteinyl-[SCAN] + S-nitroso-L-cysteinyl-[protein]. Enzyme that can both act as a NAD(P)H-dependent reductase and a S-nitroso-CoA-dependent nitrosyltransferase. Promotes fetal heme degradation during development. Also expressed in adult tissues, where it acts as a regulator of hematopoiesis, intermediary metabolism (glutaminolysis, glycolysis, TCA cycle and pentose phosphate pathway) and insulin signaling. Has a broad specificity oxidoreductase activity by catalyzing the NAD(P)H-dependent reduction of a variety of flavins, such as riboflavin, FAD or FMN, biliverdins, methemoglobin and PQQ (pyrroloquinoline quinone). Contributes to fetal heme catabolism by catalyzing reduction of biliverdin IXbeta into bilirubin IXbeta in the liver. Biliverdin IXbeta, which constitutes the major heme catabolite in the fetus is not present in adult. Does not reduce bilirubin IXalpha. Can also reduce the complexed Fe(3+) iron to Fe(2+) in the presence of FMN and NADPH. Acts as a protein nitrosyltransferase by catalyzing nitrosylation of cysteine residues of target proteins, such as HMOX2, INSR and IRS1. S-nitroso-CoA-dependent nitrosyltransferase activity is mediated via a 'ping-pong' mechanism: BLVRB first associates with both S-nitroso-CoA and protein substrate, nitric oxide group is then transferred from S-nitroso-CoA to Cys-109 and Cys-188 residues of BLVRB and from S-nitroso-BLVRB to the protein substrate. Inhibits insulin signaling by mediating nitrosylation of INSR and IRS1, leading to their inhibition. The sequence is that of Flavin reductase (NADPH) (BLVRB) from Bos taurus (Bovine).